Consider the following 398-residue polypeptide: Cytochrome b (398 aa).

Residues L45–M65 traverse the membrane as a helical segment. Residues H95 and H109 each coordinate heme b. Helical transmembrane passes span A96–Y116, I129–W149, F164–V184, F192–V212, F245–Y265, P277–L297, L304–D324, I339–V359, and I366–G386. 2 residues coordinate heme b: H196 and H210.

This sequence belongs to the cytochrome b family. As to quaternary structure, the main subunits of complex b-c1 are: cytochrome b, cytochrome c1 and the Rieske protein. Requires heme b as cofactor.

The protein localises to the cell membrane. Its function is as follows. Component of the ubiquinol-cytochrome c reductase complex (complex III or cytochrome b-c1 complex), which is a respiratory chain that generates an electrochemical potential coupled to ATP synthesis. The chain is Cytochrome b (petB) from Rickettsia prowazekii (strain Madrid E).